Reading from the N-terminus, the 913-residue chain is Protein SEY1 homolog (913 aa).

At 1–825 (MANASKTQII…ETGGQMSLKN (825 aa)) the chain is on the cytoplasmic side. The GB1/RHD3-type G domain occupies 33-288 (GFNYNVIAIL…IPADGFAQYC (256 aa)). 43–50 (GSQSSGKS) contributes to the GTP binding site. Disordered stretches follow at residues 89–108 (AGGS…GDKP) and 436–455 (TEQD…AKKG). Coiled-coil stretches lie at residues 636 to 659 (DDEN…MESL) and 703 to 727 (IEII…VIIN). Residues 826–846 (VPFAFWVILLILGWNEILMFT) form a helical membrane-spanning segment. At 847-849 (RLF) the chain is on the lumenal side. The helical transmembrane segment at 850–870 (FRLNIILPMFMAFIIIVGSCL) threads the bilayer. Topologically, residues 871–913 (YTGNAQVLSYLNKIAFIVIKHSYNFYKHLQTVGNQPTKPEKVD) are cytoplasmic.

It belongs to the TRAFAC class dynamin-like GTPase superfamily. GB1/RHD3 GTPase family. RHD3 subfamily.

It is found in the endoplasmic reticulum membrane. Its function is as follows. Probable GTP-binding protein involved in generating and maintaining the structure of the tubular endoplasmic reticulum network. The protein is Protein SEY1 homolog of Plasmodium chabaudi chabaudi.